The primary structure comprises 1499 residues: MLSFIQYTLGIMSSLGNGNNQHNINSNTGSSQNSAAEGTMERGSCILVRYASQNSLDESSQKQLPRSNGKEKTTGAYRNNIHTQRSFEAMNMMREQNLLCDVVLVAEGIEIPAHKMVLASCSPYFYAMFTGFEESRQDRITLQGVDPRALQLLIEYVYRAVVEVTEDNVQILLTAANLLQLTDVRDACCDYLQTQLDPSNCLGIRDFADIHGCIDLLNYAETYIEQHFSEVVQFDEFLNLTSDQVAHLIKSDRLSVPTEEKVYECVITWIQYDVNGRQHHLAELMEHVRLPLLSQDYLVQYVEKEQLMKGDLQCKDYIIEALKYHLLKGEQKTCFKTPRTIPRQPVGLPKVLLVIGGQAPKAIRSVECYDLREEKWYQVAEMPTRRCRAGLAVLGDKVYAVGGFNGSLRVKTVDVYDPVLDQWTTSHNMEARRSTLGVAVLNNCIYAVGGFDGSTGLSSAEMFDPKRQEWRLIASMSTRRSSVGVGVVNGLLYAVGGYDGASRQCLASVERYNPSTDTWTQIAEMSARRSGAGVGVLDNILYAVGGHDGPLVRKSVEAYDPATNTWRAVGDMAFCRRNAGVVAHNGMLYVVGGDDGLSNLASVEVYSPESDSWRILPSSMSIGRSYAGVAMIDKPLUSEQQGARVATKQSYASHHPTGTIYSRYANCAALQQAQNEAAAGQAAGFGNDDENSQAEGLNPEPANSNNSAPNGNNVHYENIYESIEQFAPLNGGNGGNGGAHAGIPAGSNPLQYAVLNQPQPGPSGLGPGQAHRSLGGERGAVGGGGGGGGAVGGGCIPPPPPSMLHSMQQLYHPMAYRNELYDRTAGYDVPRGRPAPSYYQNQPPTGPSANGRCPNLHLDLNRVRYPSGASAQQQQRTPRQRSFDDTESYHYYRCQNQSNGTAKYDNLYERVREEPAYQNTGSFAPAANRAAGLFGRFDVIGHGVGRIERHLSSSCGNIDHYSLGGHYAVLGHSHLGTMGHIRLNQSNSSSASSASPYGANGPATTSQPNPTKDSSSVNVKSFLSCLGGENSQSMNNLNKSSAAHGTASGSAPAANGNEATLPGSISGGASGGGAGGAGSSGGNGGQGSSIMGGLASAAAVGVNGTGASTSTTLGGKSTGAIPKISRKSKQSQQQGPSDPTAGTSAPQSLAGGNGLPPVDVSLGAPADPMYANGCGGRVTKPSLQWLLVNKWLPLWVGQTPPDYKFIDFNFMFSRNCDGCSSAGGSHGQQQQQPQELVRYGTIDQADYIPPAREYPTMTGSYPRVLRNTPQLARLREHEYENVPLNDPPPGRGLRGIASPLQVGRARSESPSRPPGSDPLRTWAFDFENNTFRPARSPALATSSGLAINREKPREVRRITDGTFGARDLAQPDTEKPGPSGLASKLALLKQPEPDKEDGRLSSASSSSDSDNFAIESLAAESSGGQPDEEEEEEGGSTRSGVGRRDDGGRVVGNSTEKENVGSSSNETSDSLNYDGPASADRSLSEDEVEAARPDNTASE.

Positions Leu56–Arg66 are enriched in polar residues. The disordered stretch occupies residues Leu56–Gly75. The BTB domain maps to Cys100–Glu166. Kelch repeat units follow at residues Val351 to Asp396, Lys397 to Asn443, Cys444 to Gly490, Leu492 to Asn539, Leu541 to Gly586, and Leu588 to Lys634. Residue Sec637 is a non-standard amino acid, selenocysteine. 8 disordered regions span residues Ala679–Val714, Leu750–Gly786, Ala825–Leu856, Asn984–Val1017, Ser1033–Gly1085, Ala1107–Val1160, Gln1301–Thr1321, and Ala1334–Glu1499. Over residues Asn698 to Asn713 the composition is skewed to low complexity. Positions Gly776–Gly786 are enriched in gly residues. Residues Ser986 to Ala1003 show a composition bias toward low complexity. Positions Thr1004–Val1017 are enriched in polar residues. A compositionally biased stretch (low complexity) spans Ser1040–Ala1054. Positions Ile1065 to Gly1085 are enriched in gly residues. Low complexity predominate over residues Ala1107–Gly1119. The span at Gly1135–Gln1147 shows a compositional bias: polar residues. Residues Asn1348–Thr1359 show a composition bias toward basic and acidic residues. Positions Ser1401–Asp1410 are enriched in low complexity. Residues Val1460–Leu1471 show a composition bias toward polar residues.

Its subcellular location is the cytoplasm. It is found in the cytoskeleton. In terms of biological role, may play a role in organizing the actin cytoskeleton. This is Ring canal kelch homolog from Anopheles stephensi (Indo-Pakistan malaria mosquito).